We begin with the raw amino-acid sequence, 242 residues long: DNA repair protein RecO (242 aa).

The protein belongs to the RecO family. Monomer.

Its function is as follows. Involved in DNA repair and RecF pathway recombination. This Shigella dysenteriae serotype 1 (strain Sd197) protein is DNA repair protein RecO.